A 63-amino-acid polypeptide reads, in one-letter code: Large ribosomal subunit protein uL29 (63 aa).

It belongs to the universal ribosomal protein uL29 family.

This chain is Large ribosomal subunit protein uL29, found in Histophilus somni (strain 129Pt) (Haemophilus somnus).